The primary structure comprises 83 residues: Cytochrome b559 subunit alpha (83 aa).

The chain crosses the membrane as a helical span at residues 21-35 (VIHSITIPSLFIAGW). H23 serves as a coordination point for heme.

Belongs to the PsbE/PsbF family. Heterodimer of an alpha subunit and a beta subunit. PSII is composed of 1 copy each of membrane proteins PsbA, PsbB, PsbC, PsbD, PsbE, PsbF, PsbH, PsbI, PsbJ, PsbK, PsbL, PsbM, PsbT, PsbX, PsbY, PsbZ, Psb30/Ycf12, at least 3 peripheral proteins of the oxygen-evolving complex and a large number of cofactors. It forms dimeric complexes. Heme b serves as cofactor.

Its subcellular location is the plastid. It localises to the chloroplast thylakoid membrane. Functionally, this b-type cytochrome is tightly associated with the reaction center of photosystem II (PSII). PSII is a light-driven water:plastoquinone oxidoreductase that uses light energy to abstract electrons from H(2)O, generating O(2) and a proton gradient subsequently used for ATP formation. It consists of a core antenna complex that captures photons, and an electron transfer chain that converts photonic excitation into a charge separation. The protein is Cytochrome b559 subunit alpha of Anthoceros angustus (Hornwort).